Here is a 3088-residue protein sequence, read N- to C-terminus: Protein prune homolog 2 (3088 aa).

Met-1 bears the N-acetylmethionine mark. A DHH motif motif is present at residues 109–111 (GSS). Disordered regions lie at residues 433-468 (IRSS…GLDS), 490-628 (HFDL…EPAS), 673-759 (SSEQ…QGTN), 771-795 (SGRS…AAVA), 846-909 (SELL…PKTR), 952-1080 (SNLG…SSYD), 1192-1211 (SDEH…NEKS), 1231-1371 (SFML…LVAS), 1413-1452 (RDVQ…GMNF), 1472-1491 (LEPE…SLDF), 1515-1585 (VKGS…QESE), 1632-1698 (DSFS…EESI), 1741-1768 (LDSS…DPWT), 1782-1813 (VEKE…KNED), 2089-2114 (ILTH…SEAK), 2173-2215 (YQAD…PDMA), 2240-2260 (QEPT…PESQ), 2492-2542 (SDLP…KNED), 2589-2667 (TQLA…SELG), 2687-2710 (ALEE…AGPD), 2814-2833 (QSEG…EIDI), and 2841-2875 (PDEA…AEEE). A compositionally biased stretch (low complexity) spans 503–512 (SGQSQQSSHS). Residues 562–582 (SLVEHDEEFVQRQDSPRDNSE) are compositionally biased toward basic and acidic residues. 2 stretches are compositionally biased toward polar residues: residues 613-625 (MNSL…STEE) and 673-684 (SSEQESVFQSPE). Over residues 685–699 (SWKEHKPSSIDRRAS) the composition is skewed to basic and acidic residues. Residues 750 to 759 (LPNTSPQGTN) show a composition bias toward polar residues. A compositionally biased stretch (polar residues) spans 846–857 (SELLDNSPSEIN). Residues 865–876 (WGKKNNDSRDHI) are compositionally biased toward basic and acidic residues. Positions 881–894 (NPSSDLDHTWTNSK) are enriched in polar residues. The segment covering 895–909 (PPKEDQNGLVDPKTR) has biased composition (basic and acidic residues). Over residues 964-977 (DTNYSTSDSYTSPT) the composition is skewed to low complexity. Basic and acidic residues predominate over residues 980–1000 (GDEKETEHKPFAKEEGFESKD). Polar residues-rich tracts occupy residues 1001-1027 (GNST…SSGP) and 1037-1048 (HTDNSSEINTTH). Composition is skewed to basic and acidic residues over residues 1049–1062 (NLDE…HTDG), 1192–1208 (SDEH…HTLN), 1282–1293 (HLDKQDTERETL), 1314–1339 (DPWK…RGHL), and 1425–1434 (QPKDTHEKHL). Residues 1436-1450 (SQRNSGETTETSDGM) are compositionally biased toward polar residues. Residues 1537 to 1585 (SSEYTHSSASSPELNDSSVALSSWGQQPSSGYQEENQGNWSEQNHQESE) are compositionally biased toward polar residues. Over residues 1687 to 1698 (SDDDSVGGEESI) the composition is skewed to acidic residues. The span at 1752–1768 (KSNPFCDNQQSSPDPWT) shows a compositional bias: polar residues. Composition is skewed to basic and acidic residues over residues 2516 to 2542 (EKTI…KNED) and 2604 to 2622 (NERK…DTRS). The span at 2623-2632 (SFESPAQDQS) shows a compositional bias: polar residues. Residues 2823 to 2833 (DNLDSPDEIDI) are compositionally biased toward acidic residues. The region spanning 2895–3056 (DMKVIEPYRR…SIIKLDEELR (162 aa)) is the CRAL-TRIO domain.

This sequence belongs to the PPase class C family. Prune subfamily. As to expression, a high level of expression seen in the nervous system (brain, cerebellum and spinal cord) as well as adrenal gland. Expressed at high levels in noneuroblastoma, rhabdomyosarcoma, melanoma and some osteosarcoma cell lines, whereas at only low levels in cancer cell lines of liver, breast, thyroid and colon. Expression is significantly higher in favorable tumors than aggressive ones.

The protein resides in the cytoplasm. May play an important role in regulating differentiation, survival and aggressiveness of the tumor cells. This Homo sapiens (Human) protein is Protein prune homolog 2 (PRUNE2).